A 138-amino-acid polypeptide reads, in one-letter code: MVDYFDYNSLLTRAREQLPEEVFKDVRFEIPSADSFVEGNRTIIKNFKDIAKFMERDAQEFAKYVMKELGTAGDIEGVRLILQGKFGWRMVNEKIQNYVNEYVLCPECGKPDTKIVKEGRIHFLKCTACGAMKPVKTL.

Belongs to the eIF-2-beta/eIF-5 family. As to quaternary structure, heterotrimer composed of an alpha, a beta and a gamma chain.

Functionally, eIF-2 functions in the early steps of protein synthesis by forming a ternary complex with GTP and initiator tRNA. The polypeptide is Translation initiation factor 2 subunit beta (Methanococcus maripaludis (strain C5 / ATCC BAA-1333)).